We begin with the raw amino-acid sequence, 694 residues long: Putative serine/threonine-protein kinase R679 (694 aa).

Residues 167 to 548 (ITKNKTVGKG…ITNILKHLFT (382 aa)) enclose the Protein kinase domain. ATP is bound by residues 173 to 181 (VGKGAAGIA) and Lys196. The Proton acceptor role is filled by Asp395.

Belongs to the protein kinase superfamily. Ser/Thr protein kinase family.

Its subcellular location is the virion. It catalyses the reaction L-seryl-[protein] + ATP = O-phospho-L-seryl-[protein] + ADP + H(+). The catalysed reaction is L-threonyl-[protein] + ATP = O-phospho-L-threonyl-[protein] + ADP + H(+). The polypeptide is Putative serine/threonine-protein kinase R679 (Acanthamoeba polyphaga (Amoeba)).